A 287-amino-acid polypeptide reads, in one-letter code: Phospholipase A and acyltransferase 5 (287 aa).

2 disordered regions span residues 48–72 (PKQISRTASTESSDTQPTNDSASSQ) and 86–138 (DRGL…SNQK). Composition is skewed to polar residues over residues 49 to 72 (KQISRTASTESSDTQPTNDSASSQ) and 128 to 138 (LKNQAAESNQK). Residues 144–257 (LIEIFRIGYE…LRYGVPRSQQ (114 aa)) form the LRAT domain. Residues His154 and His166 contribute to the active site. The Acyl-thioester intermediate role is filled by Cys241.

The protein belongs to the H-rev107 family. In terms of tissue distribution, expressed in testis.

It localises to the cytoplasm. Its subcellular location is the cytosol. It catalyses the reaction a 1,2-diacyl-sn-glycero-3-phosphocholine + H2O = a 1-acyl-sn-glycero-3-phosphocholine + a fatty acid + H(+). The enzyme catalyses a 1,2-diacyl-sn-glycero-3-phosphocholine + H2O = a 2-acyl-sn-glycero-3-phosphocholine + a fatty acid + H(+). It carries out the reaction 1-hexadecanoyl-2-(5Z,8Z,11Z,14Z-eicosatetraenoyl)-sn-glycero-3-phosphocholine + 1,2-di-(9Z-octadecenoyl)-sn-glycero-3-phosphoethanolamine = N-(5Z,8Z,11Z,14Z-eicosatetraenoyl)-1,2-di-(9Z-octadecenoyl)-sn-glycero-3-phosphoethanolamine + 1-hexadecanoyl-sn-glycero-3-phosphocholine + H(+). The catalysed reaction is 1,2-di-(9Z-octadecenoyl)-sn-glycero-3-phosphoethanolamine + 1,2-dihexadecanoyl-sn-glycero-3-phosphocholine = N-hexadecanoyl-1,2-di-(9Z-octadecenoyl)-sn-glycero-3-phosphoethanolamine + 1-hexadecanoyl-sn-glycero-3-phosphocholine + H(+). It catalyses the reaction 1,2-di-(9Z-octadecenoyl)-sn-glycero-3-phosphoethanolamine + 1,2-dihexadecanoyl-sn-glycero-3-phosphocholine = N-hexadecanoyl-1,2-di-(9Z-octadecenoyl)-sn-glycero-3-phosphoethanolamine + 2-hexadecanoyl-sn-glycero-3-phosphocholine + H(+). The enzyme catalyses a 1,2-diacyl-sn-glycero-3-phosphoethanolamine + a 1,2-diacyl-sn-glycero-3-phosphocholine = an N-acyl-1,2-diacyl-sn-glycero-3-phosphoethanolamine + a 1-acyl-sn-glycero-3-phosphocholine + H(+). It carries out the reaction a 1,2-diacyl-sn-glycero-3-phosphoethanolamine + a 1,2-diacyl-sn-glycero-3-phosphocholine = an N-acyl-1,2-diacyl-sn-glycero-3-phosphoethanolamine + a 2-acyl-sn-glycero-3-phosphocholine + H(+). The catalysed reaction is 1-hexadecanoyl-2-(9Z-octadecenoyl)-sn-glycero-3-phosphocholine + 1,2-di-(9Z-octadecenoyl)-sn-glycero-3-phosphoethanolamine = N,1,2-tri-(9Z-octadecenoyl)-sn-glycero-3-phosphoethanolamine + 1-hexadecanoyl-sn-glycero-3-phosphocholine + H(+). In terms of biological role, exhibits both phospholipase A1/2 and acyltransferase activities. Shows phospholipase A1 (PLA1) and A2 (PLA2) activity, catalyzing the calcium-independent release of fatty acids from the sn-1 or sn-2 position of glycerophospholipids. Shows N-acyltransferase activity, catalyzing the calcium-independent transfer of a fatty acyl group at the sn-1 position of phosphatidylcholine (PC) and other glycerophospholipids to the primary amine of phosphatidylethanolamine (PE), forming N-acylphosphatidylethanolamine (NAPE), which serves as precursor for N-acylethanolamines (NAEs). This chain is Phospholipase A and acyltransferase 5, found in Rattus norvegicus (Rat).